The sequence spans 393 residues: MRDAIPLGRIAGFVVNVHWSVLVILWLFTWSLATMLPGTVGGYPAVVYWLLGAGGAVMLLASLLAHELAHAVVARRAGVSVESVTLWLFGGVTALGGEAKTPKAAFRIAFAGPATSLALSATFGALAITLAGVRTPAIVISVAWWLATVNLLLGLFNLLPGAPLDGGRLVRAYLWRRHGDSVRAGIGAARAGRVVALVLIALGLAEFVAGGLVGGVWLAFIGWFIFAAAREEETRISTQQLFAGVRVADAMTAQPHTAPGWINVEDFIQRYVLGERHSAYPVADRDGSITGLVALRQLRDVAPSRRSTTSVGDIALPLHSVPTARPQEPLTALLERMAPLGPRSRALVTEGSAVVGIVTPSDVARLIDVYRLAQPEPTFTTSPQDADRFSDAG.

2 consecutive transmembrane segments (helical) span residues 10-30 (IAGFVVNVHWSVLVILWLFTW) and 45-65 (AVVYWLLGAGGAVMLLASLLA). His-66 lines the Zn(2+) pocket. The active site involves Glu-67. A Zn(2+)-binding site is contributed by His-70. Helical transmembrane passes span 77 to 97 (AGVSVESVTLWLFGGVTALGG), 108 to 128 (IAFAGPATSLALSATFGALAI), 136 to 156 (PAIVISVAWWLATVNLLLGLF), and 207 to 227 (FVAGGLVGGVWLAFIGWFIFA). 2 CBS domains span residues 251–308 (MTAQ…RRST) and 315–376 (ALPL…AQPE).

This sequence belongs to the peptidase M50B family. Zn(2+) is required as a cofactor.

Its subcellular location is the cell membrane. This Mycobacterium tuberculosis (strain ATCC 35801 / TMC 107 / Erdman) protein is Putative zinc metalloprotease Rip3 (rip3).